The primary structure comprises 504 residues: Cytochrome P450 2D9 (504 aa).

Ser249 is subject to Phosphoserine. Cys446 contacts heme.

It belongs to the cytochrome P450 family. Heme serves as cofactor.

The protein resides in the endoplasmic reticulum membrane. Its subcellular location is the microsome membrane. The enzyme catalyses an organic molecule + reduced [NADPH--hemoprotein reductase] + O2 = an alcohol + oxidized [NADPH--hemoprotein reductase] + H2O + H(+). Cytochromes P450 are a group of heme-thiolate monooxygenases. In liver microsomes, this enzyme is involved in an NADPH-dependent electron transport pathway. It oxidizes a variety of structurally unrelated compounds, including steroids, fatty acids, and xenobiotics. This is Cytochrome P450 2D9 (Cyp2d9) from Mus musculus (Mouse).